Reading from the N-terminus, the 547-residue chain is MSAKEVKFGVDARDRMLRGVDILANAVKVTLGPKGRNVVLDKSFGAPRITKDGVTVAKDIELDDKFENMGAQMVREVASKSADAAGDGTTTATVLAQAIVREGAKAVAAGMNPMDLKRGIDLAVEAVVADLVKNSKKVTSNDEIAQVGTISANGDAEIGKFLADAMKKVGNEGVITVEEAKSLETELDVVEGMQFDRGYISPYFVTNADKMRVEFDDAYILINEKKLSNLNELLPLLEAVVQTGKPLVIVAEDVEGEALATLVVNRLRGGLKVAAVKAPGFGDRRKAMLQDIAILTGGQAISEDLGIKMENVTLQMLGRAKKVMIDKENTTIVNGAGKKADIEARVAQIKAQIEETTSDYDREKLQERLAKLAGGVAVIRVGGATEVEVKERKDRVDDAMHATRAAVEEGIVPGGGVALLRASEQLKGLKTKNDDQKTGVEIVRRALSAPARQIAINAGEDGSVIVGKVLEKEQYAFGFDSQSGEYGDLVKKGIIDPTKVVRTAIQNAASVAALLITTEAMIAELPKKGGAGAGGMPPGGGMGGMDF.

Residues 30–33 (TLGP), Lys-51, 87–91 (DGTTT), Gly-415, and Asp-496 contribute to the ATP site.

It belongs to the chaperonin (HSP60) family. As to quaternary structure, forms a cylinder of 14 subunits composed of two heptameric rings stacked back-to-back. Interacts with the co-chaperonin GroES.

It localises to the cytoplasm. It carries out the reaction ATP + H2O + a folded polypeptide = ADP + phosphate + an unfolded polypeptide.. Its function is as follows. Together with its co-chaperonin GroES, plays an essential role in assisting protein folding. The GroEL-GroES system forms a nano-cage that allows encapsulation of the non-native substrate proteins and provides a physical environment optimized to promote and accelerate protein folding. The sequence is that of Chaperonin GroEL 2 from Rhodopseudomonas palustris (strain ATCC BAA-98 / CGA009).